Here is a 464-residue protein sequence, read N- to C-terminus: Chromosomal replication initiator protein DnaA (464 aa).

Residues 1–82 are domain I, interacts with DnaA modulators; the sequence is MKNAAELWHN…GSRLDIQFIE (82 aa). The segment at 82–125 is domain II; it reads EEGQAKHMLDRQNEEVEVMEVAPAKTKAQKTPKSSDELVMSELG. Positions 126 to 342 are domain III, AAA+ region; it reads QLNEKYTFDT…GALTRVIAYA (217 aa). 4 residues coordinate ATP: Gly-170, Gly-172, Lys-173, and Thr-174. The domain IV, binds dsDNA stretch occupies residues 343–464; sequence NLVGRTIDPN…EQIKHELKHS (122 aa).

The protein belongs to the DnaA family. Oligomerizes as a right-handed, spiral filament on DNA at oriC.

The protein resides in the cytoplasm. In terms of biological role, plays an essential role in the initiation and regulation of chromosomal replication. ATP-DnaA binds to the origin of replication (oriC) to initiate formation of the DNA replication initiation complex once per cell cycle. Binds the DnaA box (a 9 base pair repeat at the origin) and separates the double-stranded (ds)DNA. Forms a right-handed helical filament on oriC DNA; dsDNA binds to the exterior of the filament while single-stranded (ss)DNA is stabiized in the filament's interior. The ATP-DnaA-oriC complex binds and stabilizes one strand of the AT-rich DNA unwinding element (DUE), permitting loading of DNA polymerase. After initiation quickly degrades to an ADP-DnaA complex that is not apt for DNA replication. Binds acidic phospholipids. This Exiguobacterium sibiricum (strain DSM 17290 / CCUG 55495 / CIP 109462 / JCM 13490 / 255-15) protein is Chromosomal replication initiator protein DnaA.